Reading from the N-terminus, the 357-residue chain is MPYIGSLKVNQFRNLADVDITPHSQFNFFFGQNGAGKTSILESIYYLSVGRSFRTHLPQRLIQDNTDRFLIFITLYNGTQFIPLGVERDCHGDRCLRINGETASSWSLAAKRLPLCSLSAMSHRFLLDGPRVRRQFLDWLMFHVEPSFFSIWQRLQRSLKQRNAALKAKLPLGEITHWDKMLVEDGERLHQLRQNVVTEFKPLFTQMLQQFLPAYPLIGHYFRGWSEKYSLMEQLQINLKQDLQRGYTQAGPQRADFRLTLGDLPAQDILSQGQQKLVTYALHFAQGLLLKEKTGISPIYLIDDLPAELDANKRDCVIDLVNCLESQVFISGIDPNEIRLPPHSTLFHVKHGKVAAL.

ATP is bound at residue 31 to 38; that stretch reads GQNGAGKT.

It belongs to the RecF family.

The protein resides in the cytoplasm. Functionally, the RecF protein is involved in DNA metabolism; it is required for DNA replication and normal SOS inducibility. RecF binds preferentially to single-stranded, linear DNA. It also seems to bind ATP. The chain is DNA replication and repair protein RecF from Coxiella burnetii (strain RSA 493 / Nine Mile phase I).